The following is a 391-amino-acid chain: Formate-dependent phosphoribosylglycinamide formyltransferase (391 aa).

N(1)-(5-phospho-beta-D-ribosyl)glycinamide is bound by residues 20–21 (EL) and Glu-80. Residues Arg-112, Lys-153, 158 to 163 (SSGKGQ), 193 to 196 (EGFV), and Glu-201 contribute to the ATP site. The 190-residue stretch at 117–306 (RLAAEELQLP…EFALHVRAFT (190 aa)) folds into the ATP-grasp domain. 2 residues coordinate Mg(2+): Glu-265 and Glu-277. N(1)-(5-phospho-beta-D-ribosyl)glycinamide contacts are provided by residues Asp-284, Lys-354, and 361–362 (RR).

This sequence belongs to the PurK/PurT family. In terms of assembly, homodimer.

The catalysed reaction is N(1)-(5-phospho-beta-D-ribosyl)glycinamide + formate + ATP = N(2)-formyl-N(1)-(5-phospho-beta-D-ribosyl)glycinamide + ADP + phosphate + H(+). The protein operates within purine metabolism; IMP biosynthesis via de novo pathway; N(2)-formyl-N(1)-(5-phospho-D-ribosyl)glycinamide from N(1)-(5-phospho-D-ribosyl)glycinamide (formate route): step 1/1. Involved in the de novo purine biosynthesis. Catalyzes the transfer of formate to 5-phospho-ribosyl-glycinamide (GAR), producing 5-phospho-ribosyl-N-formylglycinamide (FGAR). Formate is provided by PurU via hydrolysis of 10-formyl-tetrahydrofolate. The polypeptide is Formate-dependent phosphoribosylglycinamide formyltransferase (Aliivibrio fischeri (strain ATCC 700601 / ES114) (Vibrio fischeri)).